Consider the following 298-residue polypeptide: ATP phosphoribosyltransferase (298 aa).

This sequence belongs to the ATP phosphoribosyltransferase family. Long subfamily. Mg(2+) serves as cofactor.

It localises to the cytoplasm. The catalysed reaction is 1-(5-phospho-beta-D-ribosyl)-ATP + diphosphate = 5-phospho-alpha-D-ribose 1-diphosphate + ATP. The protein operates within amino-acid biosynthesis; L-histidine biosynthesis; L-histidine from 5-phospho-alpha-D-ribose 1-diphosphate: step 1/9. Its activity is regulated as follows. Feedback inhibited by histidine. Functionally, catalyzes the condensation of ATP and 5-phosphoribose 1-diphosphate to form N'-(5'-phosphoribosyl)-ATP (PR-ATP). Has a crucial role in the pathway because the rate of histidine biosynthesis seems to be controlled primarily by regulation of HisG enzymatic activity. The sequence is that of ATP phosphoribosyltransferase from Aliivibrio fischeri (strain ATCC 700601 / ES114) (Vibrio fischeri).